Here is a 294-residue protein sequence, read N- to C-terminus: Polyketide transferase grgF (294 aa).

Catalysis depends on residues Cys-115, Asp-240, and His-269.

Belongs to the polyketide transferase af380 family. In terms of assembly, homodimer.

The protein operates within secondary metabolite biosynthesis. Its function is as follows. Polyketide transferase; part of the gene cluster that mediates the biosynthesis of gregatin A, a fungal polyketide featuring an alkylated furanone core. The PKS grgA synthesizes C11 and C4 polyketide chains in the presence and absence of the trans-enoyl reductase grgB, respectively. The polyketide transferase grgF is then responsible for the fusion of the two carbon chains to produce the furanone skeleton of gregatin A. GrgF first undergoes a conformational change to an open form, and the active site Cys-115 is acylated by the C11 chain. After the elimination of the phosphopantetheinyl chain, the second polyketide chain of four carbons long is delivered adjacent to the enzyme-bound C11 chain. The catalytic histidine, His-269, deprotonates a proton from C-2 of the long chain, and the resultant carbanion attacks the C-1 carbonyl of the crotonyl group to perform Claisen condensation, by which the phosphopantetheinyl chain is released. Eventually, hydrolysis of the thioester linkage probably by a His-269-activated water molecule completes the reaction to afford the grgF final product. Next, the cytochrome P450 monooxygenase grgG accepts the unstable grgF final product as substrate and performs the oxidative cyclization to furnish the gregatin scaffold and leads to the formation of desmethylgregatin A. Finally, the O-methyltransferase grgD methylates the carboxyl group of desmethylgregatin A to provide gregatin A. The protein is Polyketide transferase grgF of Penicillium sp.